The sequence spans 823 residues: Ankyrin repeat domain-containing protein 20A1 (823 aa).

ANK repeat units follow at residues 66–95 (QHRTALHLACTSGHVQVVTLLVNRKCQIDV), 99–128 (ENRTPLIQAVHCQEEACAVILLEHGANPNL), 132–161 (YGNTALHYAVYSESTSLAEKLLSHGAHIEA), 165–194 (DNNTPLLFAIICKKEKMVEFLLKKKASSHA), and 198–227 (LRRSALMLAVYYDSPGIVNILLKQNIDVFA). Disordered stretches follow at residues 301-343 (VPEK…EVED) and 355-402 (VQTL…LSEN). The span at 372–384 (QERHERSEKKQPQ) shows a compositional bias: basic and acidic residues. 3 coiled-coil regions span residues 431–480 (KKLK…KQLE), 565–724 (EMIT…NNST), and 776–805 (LVLEEKSKKLMNECDHLKESLFQYEREKTE).

The sequence is that of Ankyrin repeat domain-containing protein 20A1 (ANKRD20A1) from Homo sapiens (Human).